The chain runs to 116 residues: Ribonuclease P protein component (116 aa).

This sequence belongs to the RnpA family. In terms of assembly, consists of a catalytic RNA component (M1 or rnpB) and a protein subunit.

It catalyses the reaction Endonucleolytic cleavage of RNA, removing 5'-extranucleotides from tRNA precursor.. RNaseP catalyzes the removal of the 5'-leader sequence from pre-tRNA to produce the mature 5'-terminus. It can also cleave other RNA substrates such as 4.5S RNA. The protein component plays an auxiliary but essential role in vivo by binding to the 5'-leader sequence and broadening the substrate specificity of the ribozyme. The chain is Ribonuclease P protein component from Leuconostoc citreum (strain KM20).